The following is a 355-amino-acid chain: MDKKNGLTYAEAGVDIDAGNALVETIKPFVRATRRAGADAELGGFGGLFDLKAAGFQDPILVAANDGVGSKVKLAIETGQHDTIGVDLVAMCVNDLIVQGAEPLFFLDYYATGKLEPATAASVVKGIADGCREAGCALIGGETAEMPGLYTGKDYDLAGFAVGAVERGHLLPRTDIAAGDLLLGLPSSGLHSNGFSLVRRVLADNGASLDGPAPYEPGKTLGESLLTPTRIYVRPLLHVFAATQAVKALAHITGGGFQENLPRVLPAGFGLALDLSALAVPPVFGWLAREGGIAETEMLRTFNCGIGMVLIVANDEASKVEEALRAAGEQPIRLGSVIPAPETGPRVTFQGQLSL.

It belongs to the AIR synthase family.

Its subcellular location is the cytoplasm. The catalysed reaction is 2-formamido-N(1)-(5-O-phospho-beta-D-ribosyl)acetamidine + ATP = 5-amino-1-(5-phospho-beta-D-ribosyl)imidazole + ADP + phosphate + H(+). The protein operates within purine metabolism; IMP biosynthesis via de novo pathway; 5-amino-1-(5-phospho-D-ribosyl)imidazole from N(2)-formyl-N(1)-(5-phospho-D-ribosyl)glycinamide: step 2/2. This Beijerinckia indica subsp. indica (strain ATCC 9039 / DSM 1715 / NCIMB 8712) protein is Phosphoribosylformylglycinamidine cyclo-ligase.